A 1655-amino-acid polypeptide reads, in one-letter code: MLKCIPLWRCNRHVESVDKRHCSLQAVPEEIYRYSRSLEELLLDANQLRELPKPFFRLLNLRKLGLSDNEIQRLPPEVANFMQLVELDVSRNDIPEIPESIKFCKALEIADFSGNPLSRLPDGFTQLRSLAHLALNDVSLQALPGDVGNLANLVTLELRENLLKSLPASLSFLVKLEQLDLGGNDLEVLPDTLGALPNLRELWLDRNQLSALPPELGNLRRLVCLDVSENRLEELPAELGGLVLLTDLLLSQNLLRRLPDGIGQLKQLSILKVDQNRLCEVTEAIGDCENLSELILTENLLMALPRSLGKLTKLTNLNVDRNHLEALPPEIGGCVALSVLSLRDNRLAVLPPELAHTTELHVLDVAGNRLQSLPFALTHLNLKALWLAENQAQPMLRFQTEDDARTGEKVLTCYLLPQQPPPSLEDAGQQGSLSETWSDAPPSRVSVIQFLEAPIGDEDAEEAAAEKRGLQRRATPHPSELKVMKRSIEGRRSEACPCQPDSGSPLPAEEEKRLSAESGLSEDSRPSASTVSEAEPEGPSAEAQGGSQQEATTAGGEEDAEEDYQEPTVHFAEDALLPGDDREIEEGQPEAPWTLPGGRQRLIRKDTPHYKKHFKISKLPQPEAVVALLQGMQPDGEGPVAPGGWHNGPHAPWAPRAQKEEEEEEEGSPQEEEEEEEEENRAEEEEASTEEEDKEGAVVSAPSVKGVSFDQANNLLIEPARIEEEELTLTILRQTGGLGISIAGGKGSTPYKGDDEGIFISRVSEEGPAARAGVRVGDKLLEVNGVALQGAEHHEAVEALRGAGTAVQMRVWRERMVEPENAVTITPLRPEDDYSPRERRGGGLRLPLLPPESPGPLRQRHVACLARSERGLGFSIAGGKGSTPYRAGDAGIFVSRIAEGGAAHRAGTLQVGDRVLSINGVDVTEARHDHAVSLLTAASPTIALLLEREAGGPLPPSPLPHSSPPTAAVATTSITTATPGVPGLPSLAPSLLAAALEGPYPVEEIRLPRAGGPLGLSIVGGSDHSSHPFGVQEPGVFISKVLPRGLAARSGLRVGDRILAVNGQDVRDATHQEAVSALLRPCLELSLLVRRDPAPPGLRELCIQKAPGERLGISIRGGARGHAGNPRDPTDEGIFISKVSPTGAAGRDGRLRVGLRLLEVNQQSLLGLTHGEAVQLLRSVGDTLTVLVCDGFEASTDAALEVSPGVIANPFAAGIGHRNSLESISSIDRELSPEGPGKEKELPGQTLHWGPEATEAAGRGLQPLKLDYRALAAVPSAGSVQRVPSGAAGGKMAESPCSPSGQQPPSPPSPDELPANVKQAYRAFAAVPTSHPPEDAPAQPPTPGPAASPEQLSFRERQKYFELEVRVPQAEGPPKRVSLVGADDLRKMQEEEARKLQQKRAQMLREAAEAGAEARLALDGETLGEEEQEDEQPPWASPSPTSRQSPASPPPLGGGAPVRTAKAERRHQERLRVQSPEPPAPERALSPAELRALEAEKRALWRAARMKSLEQDALRAQMVLSRSQEGRGTRGPLERLAEAPSPAPTPSPTPVEDLGPQTSTSPGRLPLSGKKFDYRAFAALPSSRPVYDIQSPDFAEELRSLEPSPSPGPQEEDGEVALVLLGRPSPGAVGPEDVALCSSRRPVRPGRRGLGPVPS.

Positions 1–818 are sufficient for targeting to adherens junction and to inhibit cell proliferation; sequence MLKCIPLWRC…MRVWRERMVE (818 aa). Serine 37 carries the phosphoserine modification. LRR repeat units follow at residues 37–58, 60–81, 83–104, 106–127, 129–150, 152–174, 175–197, 198–219, 221–243, 244–265, 267–288, 290–312, 313–334, 336–357, 359–381, and 382–402; these read SLEE…FFRL, NLRK…VANF, QLVE…IKFC, ALEI…FTQL, SLAH…VGNL, NLVT…SFLV, KLEQ…GALP, NLRE…LGNL, RLVC…GGLV, LLTD…IGQL, QLSI…IGDC, NLSE…GKLT, KLTN…IGGC, ALSV…LAHT, ELHV…THLN, and LKAL…QTED. Threonine 378 is modified (phosphothreonine). Disordered regions lie at residues 417–440, 459–606, and 628–702; these read PQQP…WSDA, DAEE…IRKD, and LLQG…VSAP. Residues 458 to 474 are a coiled coil; the sequence is EDAEEAAAEKRGLQRRA. Threonine 475 carries the post-translational modification Phosphothreonine. Residues 479-494 are compositionally biased toward basic and acidic residues; it reads SELKVMKRSIEGRRSE. Serine 504 bears the Phosphoserine mark. The span at 537–555 shows a compositional bias: low complexity; the sequence is EGPSAEAQGGSQQEATTAG. 2 stretches are compositionally biased toward acidic residues: residues 556–565 and 660–694; these read GEEDAEEDYQ and EEEE…EEDK. Residues 656–701 are a coiled coil; that stretch reads RAQKEEEEEEEGSPQEEEEEEEEENRAEEEEASTEEEDKEGAVVSA. Phosphoserine is present on serine 688. Threonine 689 carries the phosphothreonine modification. Residues serine 708 and serine 764 each carry the phosphoserine modification. Residues 717 to 1229 are interaction with ARHGEF7; the sequence is IEPARIEEEE…SLESISSIDR (513 aa). The PDZ 1 domain maps to 728–815; it reads TLTILRQTGG…AVQMRVWRER (88 aa). A required for interaction with VIM region spans residues 728–1194; sequence TLTILRQTGG…TVLVCDGFEA (467 aa). Threonine 826 carries the phosphothreonine modification. A disordered region spans residues 827 to 853; that stretch reads PLRPEDDYSPRERRGGGLRLPLLPPES. Residues 829 to 841 show a composition bias toward basic and acidic residues; that stretch reads RPEDDYSPRERRG. Residues serine 835, serine 853, serine 875, and serine 939 each carry the phosphoserine modification. 3 consecutive PDZ domains span residues 862–950, 1004–1093, and 1100–1194; these read VACL…EREA, EIRL…RRDP, and ELCI…GFEA. Residues 1105-1117 form an interaction with tick-borne encephalitis virus RNA-directed RNA polymerase NS5 region; the sequence is KAPGERLGISIRG. Serine 1140, serine 1220, serine 1223, serine 1226, serine 1232, serine 1276, serine 1279, serine 1295, serine 1298, serine 1306, and serine 1309 each carry phosphoserine. A compositionally biased stretch (basic and acidic residues) spans 1227-1242; the sequence is IDRELSPEGPGKEKEL. Positions 1227–1246 are disordered; it reads IDRELSPEGPGKEKELPGQT. The disordered stretch occupies residues 1277 to 1489; that stretch reads AGSVQRVPSG…APERALSPAE (213 aa). Residues 1302–1311 are compositionally biased toward pro residues; sequence QQPPSPPSPD. Threonine 1342 carries the phosphothreonine modification. The residue at position 1348 (serine 1348) is a Phosphoserine. Residues 1353–1365 show a composition bias toward basic and acidic residues; that stretch reads SFRERQKYFELEV. A Phosphoserine modification is found at serine 1378. Residues 1379–1419 adopt a coiled-coil conformation; that stretch reads LVGADDLRKMQEEEARKLQQKRAQMLREAAEAGAEARLALD. The segment covering 1383–1395 has biased composition (basic and acidic residues); sequence DDLRKMQEEEARK. Residues 1409-1421 show a composition bias toward low complexity; sequence EAGAEARLALDGE. Acidic residues predominate over residues 1422-1432; the sequence is TLGEEEQEDEQ. Phosphoserine occurs at positions 1437, 1445, and 1448. Over residues 1461–1472 the composition is skewed to basic and acidic residues; the sequence is AKAERRHQERLR. A phosphoserine mark is found at serine 1475, serine 1486, and serine 1508. Positions 1520 to 1568 are disordered; the sequence is LSRSQEGRGTRGPLERLAEAPSPAPTPSPTPVEDLGPQTSTSPGRLPLS. The segment covering 1524–1537 has biased composition (basic and acidic residues); that stretch reads QEGRGTRGPLERLA. Serine 1541 is modified (phosphoserine). Threonine 1545 is modified (phosphothreonine). Phosphoserine is present on residues serine 1547, serine 1561, and serine 1591. Residues 1622–1655 are disordered; sequence GRPSPGAVGPEDVALCSSRRPVRPGRRGLGPVPS.

This sequence belongs to the LAP (LRR and PDZ) protein family. In terms of assembly, interacts with UBE3A. Interacts with PAK1 and PAK2. Interacts (via PDZ domains) with VANGL2. Interacts (via PDZ domains) with LPP and TRIP6; the interaction is direct. Interacts (via PDZ domains) with TJP2. Interacts (via PDZ domains) with APC; may mediate APC targeting to adherens junctions of epithelial cells. Interacts (via PDZ domains) with TSHR; regulates TSHR trafficking and function. Interacts with ARHGEF7 and GIT1; interacts directly with ARHGEF7. Interacts with CTNNB1. Interacts with MAPK12. Interacts (via PDZ domains 1 and 3) with MCC. Interacts with DLG5. Interacts with STK4/MST1 and LATS1 in the presence of DLG5. Interacts (via PDZ domain 3) with CRTAM (via PDZ-binding motif); the interaction promotes CRTAM and SCRIB polarization in a subset of CD4+ T-cells. Interacts with YES1, when YES1 is in a closed conformation; the interaction facilitates YES1 autophosphorylation. Interacts (via PDZ domains) with VIM; the interaction protects SCRIB from proteasomal degradation and facilitates SCRIB localization to intermediate filaments, the interaction is reduced by cell contact inhibition. (Microbial infection) Interacts (via fourth PDZ domain) with tick-borne encephalitis virus RNA-directed RNA polymerase NS5; this interaction targets viral NS5 to the cell membrane periphery and nucleus and prevents STAT1 phosphorylation, and thus, the activation of the JAK-STAT signaling pathway. Interacts with HPV E6. Interacts with influenza A virus protein NS1; the interaction results in the translocation of SCRIB from the cell membrane to perinuclear puncta. In terms of processing, ubiquitinated; targeted for UBE3A-dependent multiubiquitination in the presence of high-risk HPV E6 proteins and degraded. Post-translationally, palmitoylated. Could be depalmitoylated by LYPLA1 and/or LYPLA2. Palmitoylation of SCRIB by ZDHHC7 is required for its localization to cell-cell junctions, function in the establishement of epithelial cell polarity and the regulation of downstream signaling pathways important for epithelial cell differentiation. Expressed in kidney, skeletal muscles, liver, lung, breast, intestine, placenta and skin mainly in epithelial cells (at protein level).

The protein localises to the cell membrane. Its subcellular location is the cell junction. The protein resides in the adherens junction. It is found in the cell projection. It localises to the lamellipodium. The protein localises to the cytoplasm. Its subcellular location is the postsynapse. The protein resides in the presynapse. Its function is as follows. Scaffold protein involved in different aspects of polarized cell differentiation regulating epithelial and neuronal morphogenesis and T-cell polarization. Via its interaction with CRTAM, required for the late phase polarization of a subset of CD4+ T-cells, which in turn regulates TCR-mediated proliferation and IFNG and IL22 production. Plays a role in cell directional movement, cell orientation, cell sheet organization and Golgi complex polarization at the cell migration front. Promotes epithelial cell layer barrier function via maintaining cell-cell adhesion. Most probably functions in the establishment of apico-basal cell polarity. May function in cell proliferation regulating progression from G1 to S phase and as a positive regulator of apoptosis for instance during acinar morphogenesis of the mammary epithelium. May regulate cell invasion via MAPK-mediated cell migration and adhesion. May play a role in exocytosis and in the targeting of synaptic vesicles to synapses. Functions as an activator of Rac GTPase activity. This is Protein scribble homolog from Homo sapiens (Human).